A 325-amino-acid chain; its full sequence is Ribose-phosphate pyrophosphokinase (325 aa).

ATP contacts are provided by residues 45–47 and 104–105; these read NGE and RQ. The Mg(2+) site is built by His138 and Asp178. The active site involves Lys202. D-ribose 5-phosphate is bound by residues Arg204, Asp230, and 234-238; that span reads DTGGT.

This sequence belongs to the ribose-phosphate pyrophosphokinase family. Class I subfamily. Homohexamer. The cofactor is Mg(2+).

It is found in the cytoplasm. The catalysed reaction is D-ribose 5-phosphate + ATP = 5-phospho-alpha-D-ribose 1-diphosphate + AMP + H(+). It participates in metabolic intermediate biosynthesis; 5-phospho-alpha-D-ribose 1-diphosphate biosynthesis; 5-phospho-alpha-D-ribose 1-diphosphate from D-ribose 5-phosphate (route I): step 1/1. Its function is as follows. Involved in the biosynthesis of the central metabolite phospho-alpha-D-ribosyl-1-pyrophosphate (PRPP) via the transfer of pyrophosphoryl group from ATP to 1-hydroxyl of ribose-5-phosphate (Rib-5-P). This Corynebacterium glutamicum (strain ATCC 13032 / DSM 20300 / JCM 1318 / BCRC 11384 / CCUG 27702 / LMG 3730 / NBRC 12168 / NCIMB 10025 / NRRL B-2784 / 534) protein is Ribose-phosphate pyrophosphokinase.